Reading from the N-terminus, the 57-residue chain is Large ribosomal subunit protein bL32c (57 aa).

As to quaternary structure, component of the chloroplast large ribosomal subunit (LSU). Mature 70S chloroplast ribosomes of higher plants consist of a small (30S) and a large (50S) subunit. The 30S small subunit contains 1 molecule of ribosomal RNA (16S rRNA) and 24 different proteins. The 50S large subunit contains 3 rRNA molecules (23S, 5S and 4.5S rRNA) and 33 different proteins.

It localises to the plastid. It is found in the chloroplast. Functionally, component of the chloroplast ribosome (chloro-ribosome), a dedicated translation machinery responsible for the synthesis of chloroplast genome-encoded proteins, including proteins of the transcription and translation machinery and components of the photosynthetic apparatus. This is Large ribosomal subunit protein bL32c (rpl32) from Spinacia oleracea (Spinach).